The chain runs to 437 residues: UDP-N-acetylmuramoylalanine--D-glutamate ligase (437 aa).

Position 112-118 (112-118 (GSNGKST)) interacts with ATP.

This sequence belongs to the MurCDEF family.

The protein resides in the cytoplasm. It catalyses the reaction UDP-N-acetyl-alpha-D-muramoyl-L-alanine + D-glutamate + ATP = UDP-N-acetyl-alpha-D-muramoyl-L-alanyl-D-glutamate + ADP + phosphate + H(+). It participates in cell wall biogenesis; peptidoglycan biosynthesis. In terms of biological role, cell wall formation. Catalyzes the addition of glutamate to the nucleotide precursor UDP-N-acetylmuramoyl-L-alanine (UMA). This chain is UDP-N-acetylmuramoylalanine--D-glutamate ligase, found in Haemophilus influenzae (strain 86-028NP).